The sequence spans 456 residues: UDP-N-acetylglucosamine 1-carboxyvinyltransferase (456 aa).

Phosphoenolpyruvate is bound at residue 34 to 35 (KN). Arginine 104 serves as a coordination point for UDP-N-acetyl-alpha-D-glucosamine. Cysteine 128 functions as the Proton donor in the catalytic mechanism. The residue at position 128 (cysteine 128) is a 2-(S-cysteinyl)pyruvic acid O-phosphothioketal. 2 residues coordinate UDP-N-acetyl-alpha-D-glucosamine: aspartate 319 and isoleucine 341.

It belongs to the EPSP synthase family. MurA subfamily.

It is found in the cytoplasm. The enzyme catalyses phosphoenolpyruvate + UDP-N-acetyl-alpha-D-glucosamine = UDP-N-acetyl-3-O-(1-carboxyvinyl)-alpha-D-glucosamine + phosphate. It participates in cell wall biogenesis; peptidoglycan biosynthesis. Cell wall formation. Adds enolpyruvyl to UDP-N-acetylglucosamine. This is UDP-N-acetylglucosamine 1-carboxyvinyltransferase from Prochlorococcus marinus (strain MIT 9312).